Consider the following 248-residue polypeptide: Ureidoacrylate amidohydrolase RutB (248 aa).

D43 (proton acceptor) is an active-site residue. K152 is a catalytic residue. Catalysis depends on C185, which acts as the Nucleophile.

Belongs to the isochorismatase family. RutB subfamily.

It carries out the reaction (Z)-3-ureidoacrylate + H2O + H(+) = (Z)-3-aminoacrylate + NH4(+) + CO2. The catalysed reaction is (Z)-3-ureidoacrylate + H2O = (Z)-3-aminoacrylate + carbamate + H(+). It catalyses the reaction (Z)-2-methylureidoacrylate + H2O + H(+) = (Z)-2-methylaminoacrylate + NH4(+) + CO2. Hydrolyzes ureidoacrylate to form aminoacrylate and carbamate. The carbamate hydrolyzes spontaneously, thereby releasing one of the nitrogen atoms of the pyrimidine ring as ammonia and one of its carbon atoms as CO2. The polypeptide is Ureidoacrylate amidohydrolase RutB (Serratia proteamaculans (strain 568)).